Consider the following 375-residue polypeptide: Alanine racemase (375 aa).

Lys45 serves as the catalytic Proton acceptor; specific for D-alanine. Lys45 is subject to N6-(pyridoxal phosphate)lysine. Residue Arg141 participates in substrate binding. The active-site Proton acceptor; specific for L-alanine is Tyr270. A substrate-binding site is contributed by Met318.

The protein belongs to the alanine racemase family. It depends on pyridoxal 5'-phosphate as a cofactor.

It carries out the reaction L-alanine = D-alanine. Its pathway is amino-acid biosynthesis; D-alanine biosynthesis; D-alanine from L-alanine: step 1/1. Functionally, catalyzes the interconversion of L-alanine and D-alanine. May also act on other amino acids. This chain is Alanine racemase (alr), found in Pseudoalteromonas atlantica (strain T6c / ATCC BAA-1087).